Reading from the N-terminus, the 362-residue chain is Innexin-17 (362 aa).

The next 4 helical transmembrane spans lie at 27–47 (YFTV…QYVG), 101–121 (WVPF…VIWN), 189–209 (FLAT…MGLG), and 266–286 (LFIA…FDIF).

The protein belongs to the pannexin family.

It is found in the cell membrane. It localises to the cell junction. The protein resides in the gap junction. Its function is as follows. Structural component of the gap junctions. The protein is Innexin-17 of Caenorhabditis elegans.